The following is a 2248-amino-acid chain: Putative Polycomb group protein ASXL3 (2248 aa).

In terms of domain architecture, HTH HARE-type spans 10–84 (RTWAEAARLA…KSGLYALKKE (75 aa)). The interval 156–232 (ALKQALRQQQ…GKQTSQHLKR (77 aa)) is disordered. The span at 203 to 216 (KNGEADSSDKEMKH) shows a compositional bias: basic and acidic residues. Over residues 219–228 (KSPTGKQTSQ) the composition is skewed to polar residues. The 110-residue stretch at 254–363 (PGSILVNTNL…FERFYGEKLG (110 aa)) folds into the DEUBAD domain. Disordered stretches follow at residues 368 to 414 (ESVK…PASP), 547 to 583 (TSSMTHVSDTEHKESETAVETSTPKIKTGSSSLEGQF), 607 to 643 (CISETSFSSESPEGACTSLPSPGGETQSTSEESCTPA), 703 to 726 (EASPVSNLPLTSETSPMSDLPLTS), 762 to 853 (ERMA…ASIP), 869 to 1052 (LQRT…TGAR), 1123 to 1152 (TSKETRLPPPLSSKEGPPNLEVSSTPETKM), 1183 to 1203 (QQSLNPSKLPETATDLSVHSS), 1431 to 1462 (KLSAESLDKNSGPRNRADNSGKPQQPPGGFAP), 1573 to 1596 (TAPSHNFAEQARGPAPFKSEADTT), and 1990 to 2068 (LSPN…KRLS). Composition is skewed to polar residues over residues 371 to 389 (KLTTGPNNAGAQSSSSCGT), 395 to 407 (SAQTALAEQQPKS), 564 to 580 (AVETSTPKIKTGSSSLE), 607 to 617 (CISETSFSSES), and 624 to 643 (SLPSPGGETQSTSEESCTPA). Polar residues predominate over residues 796–818 (NLTSQQKNLSNTPEPIIMSSSSI). A compositionally biased stretch (low complexity) spans 937–949 (SHTSKSSEPSKSP). Basic and acidic residues-rich tracts occupy residues 950-968 (DGIRNESRDSEISKRKTAE), 975-987 (CKEKRARIEDDQS), and 997-1008 (PEKEQPPREEPR). Residues 1036–1046 (RASTSTSVSGG) are compositionally biased toward polar residues. The span at 2016 to 2046 (HPPPPPPPPPPPPLALPPPPPPPPPLPPPLP) shows a compositional bias: pro residues. A PHD-type; atypical zinc finger spans residues 2210 to 2247 (ELKCSCRLKAMIVCKGCGAFCHDDCIGPSKLCVACLVV).

Belongs to the Asx family. As to quaternary structure, core component of the polycomb repressive deubiquitinase (PR-DUB) complex, at least composed of BAP1, one of ASXL1, ASXL2 or (probably) ASXL3, and one of MBD5 or MBD6. Distinct combinations of ASXL and MBD proteins may preferentially bind specific histone modification marks. The PR-DUB core associates with a number of accessory proteins, including FOXK1, FOXK2, KDM1B, HCFC1 and OGT; KDM1B specifically associates with ASXL2 PR-DUB complexes. Interacts (via PHD domain) with MBD5 and MBD6 (via MBD domain); the interaction is probably direct and mediates association of MBD proteins with the PR-DUB core. Expressed in pancreatic islets, testis, neuroblastoma, head and neck tumor.

It is found in the nucleus. Its function is as follows. Putative Polycomb group (PcG) protein. PcG proteins act by forming multiprotein complexes, which are required to maintain the transcriptionally repressive state of homeotic genes throughout development. PcG proteins are not required to initiate repression, but to maintain it during later stages of development. They probably act via methylation of histones, rendering chromatin heritably changed in its expressibility. Non-catalytic component of the PR-DUB complex, a complex that specifically mediates deubiquitination of histone H2A monoubiquitinated at 'Lys-119' (H2AK119ub1). The PR-DUB complex is an epigenetic regulator of gene expression and acts as a transcriptional coactivator, affecting genes involved in development, cell communication, signaling, cell proliferation and cell viability. ASXL1, ASXL2 and ASXL3 function redundantly in the PR-DUB complex and are essential for chromatin recruitment and transcriptional activation of associated genes. The polypeptide is Putative Polycomb group protein ASXL3 (ASXL3) (Homo sapiens (Human)).